Reading from the N-terminus, the 1133-residue chain is Early transcription factor large subunit homolog (1133 aa).

The Helicase ATP-binding domain maps to 52–352; sequence KGGRAFFPCD…PNGQPLQRQQ (301 aa). ATP is bound at residue 99–106; it reads WQTGTGKS. Positions 281–284 match the DEAH box motif; it reads DEIH. Positions 524 to 724 constitute a Helicase C-terminal domain; it reads MMKDILSIIR…EGDKALRKHA (201 aa).

It belongs to the DEAD box helicase family. DEAH subfamily.

Its subcellular location is the virion. The enzyme catalyses ATP + H2O = ADP + phosphate + H(+). Putative initation factor. This chain is Early transcription factor large subunit homolog, found in Ornithodoros (relapsing fever ticks).